Consider the following 84-residue polypeptide: Delta-stichotoxin-Shd3a (84 aa).

The first 19 residues, 1 to 19 (MAYLKIVLVALMLVLGVSA), serve as a signal peptide directing secretion. The propeptide occupies 20–33 (MRLSDQEDQDVSVV). 3 disulfides stabilise this stretch: cysteine 38-cysteine 78, cysteine 40-cysteine 68, and cysteine 61-cysteine 79. Lysine 83 bears the Lysine amide mark.

The protein belongs to the sea anemone sodium channel inhibitory toxin family. Type II subfamily.

Its subcellular location is the secreted. The protein resides in the nematocyst. In terms of biological role, binds specifically to voltage-gated sodium channels (Nav), thereby delaying their inactivation during signal transduction. This chain is Delta-stichotoxin-Shd3a, found in Stichodactyla haddoni (Saddle carpet anemone).